We begin with the raw amino-acid sequence, 215 residues long: Probable transaldolase (215 aa).

Lys83 (schiff-base intermediate with substrate) is an active-site residue.

The protein belongs to the transaldolase family. Type 3B subfamily.

The protein localises to the cytoplasm. It carries out the reaction D-sedoheptulose 7-phosphate + D-glyceraldehyde 3-phosphate = D-erythrose 4-phosphate + beta-D-fructose 6-phosphate. The protein operates within carbohydrate degradation; pentose phosphate pathway; D-glyceraldehyde 3-phosphate and beta-D-fructose 6-phosphate from D-ribose 5-phosphate and D-xylulose 5-phosphate (non-oxidative stage): step 2/3. Transaldolase is important for the balance of metabolites in the pentose-phosphate pathway. The protein is Probable transaldolase of Clostridium perfringens (strain SM101 / Type A).